A 78-amino-acid polypeptide reads, in one-letter code: Small ribosomal subunit protein uS19m (78 aa).

The protein belongs to the universal ribosomal protein uS19 family.

The protein resides in the mitochondrion. This chain is Small ribosomal subunit protein uS19m (RPS19), found in Acanthamoeba castellanii (Amoeba).